Here is a 543-residue protein sequence, read N- to C-terminus: Protein GPR108 (543 aa).

Positions 1–32 (MAVSERRGLGRGSPAEWGQRLLLVLLLGGCSG) are cleaved as a signal peptide. Asn57 and Asn109 each carry an N-linked (GlcNAc...) asparagine glycan. A disordered region spans residues 149 to 186 (SKPGLPKPQATVPRKVDGGGTSAASKPKSTPAVIQGPS). Residues Asn200, Asn204, and Asn228 are each glycosylated (N-linked (GlcNAc...) asparagine). A run of 7 helical transmembrane segments spans residues 263–283 (LYMV…SILC), 292–312 (IHWL…FHSI), 336–356 (LLKG…WAFI), 367–387 (VFGI…IIES), 401–421 (ILFL…VWSI), 449–469 (VMVI…QVAV), and 473–493 (WQWL…VLTG). Residue Asn534 is glycosylated (N-linked (GlcNAc...) asparagine).

Belongs to the LU7TM family.

It is found in the golgi apparatus. The protein localises to the cis-Golgi network membrane. Its subcellular location is the trans-Golgi network membrane. It localises to the golgi apparatus membrane. In terms of biological role, may play a role in intracellular immune modulation by activating NF-kappaB response and attenuating Toll-like-receptor response. Functionally, (Microbial infection) Plays an essential function in adeno-associated virus (AAV) transduction across multiple serotypes except AAV5. May play a critical role in mediating the endosomal virus escape or in the AAV virions trafficking from endosomes to the nucleus. This is Protein GPR108 from Homo sapiens (Human).